Reading from the N-terminus, the 320-residue chain is MINKIGVLTSGGDSPGMNAAIRSVVRAGLSEGLEIYGISDGYQGLYQDRMRKLDRYSVSDIINRGGTFLGSARFQEFREEAIRAIALNNMSKYGLGALVVIGGDGSYMGAKLLTEMGLPCIGLPGTIDNDVAGTDYTIGYFTALETVVEAIDRLRDTSTSHQRISIVEVMGRYCGDLTMAAAIAGGCEFIVLPEVEFQPEDLVYEIKASIAQGKKHAIVAITEYICNVFELALYIEKETGRETRATVLGHIQRGGNPVAYDRILASRMGAYSIELLLQGYRGRCVGVQNERLVHHDIADVIQNMKRPFRRDFLETARKLF.

Gly-12 contacts ATP. Residues 22–26 (RSVVR) and 55–60 (RYSVSD) each bind ADP. ATP contacts are provided by residues 73–74 (RF) and 103–106 (GDGS). Residue Asp-104 coordinates Mg(2+). 126-128 (TID) contacts substrate. Residue Asp-128 is the Proton acceptor of the active site. An ADP-binding site is contributed by Arg-155. Substrate-binding positions include Arg-163 and 170–172 (MGR). Residues 186 to 188 (GCE) and 214 to 216 (KKH) contribute to the ADP site. Substrate-binding positions include Glu-223, Arg-244, and 250 to 253 (HIQR).

The protein belongs to the phosphofructokinase type A (PFKA) family. ATP-dependent PFK group I subfamily. Prokaryotic clade 'B1' sub-subfamily. As to quaternary structure, homotetramer. Mg(2+) is required as a cofactor.

The protein resides in the cytoplasm. It carries out the reaction beta-D-fructose 6-phosphate + ATP = beta-D-fructose 1,6-bisphosphate + ADP + H(+). It functions in the pathway carbohydrate degradation; glycolysis; D-glyceraldehyde 3-phosphate and glycerone phosphate from D-glucose: step 3/4. Allosterically activated by ADP and other diphosphonucleosides, and allosterically inhibited by phosphoenolpyruvate. Functionally, catalyzes the phosphorylation of D-fructose 6-phosphate to fructose 1,6-bisphosphate by ATP, the first committing step of glycolysis. The sequence is that of ATP-dependent 6-phosphofructokinase from Baumannia cicadellinicola subsp. Homalodisca coagulata.